Here is a 447-residue protein sequence, read N- to C-terminus: MKVTARLTWIEEKILEKLLGNASLTLLYQSSAHKNCVSEMTQKYSLQGSTMTVFHLEKDVVVGVFILENFPRLVSEKPCTCAWFSLKRNNSSGISALFLNTKVIVDSEELIIFSLDGLSLSVTPLRGFTLALNDTVMNGLELNLGHGFLPVECEIFRVDGIKKNPSFIKKMVTAEQHRGKLLSALRAYKPYKDLVSEVRILLVGPVGSGKSSFFNSVKSAFQGHLTRQAIVGSDESSITKQYRVYSIKDGKSGETLPFMLCDSMGLEEGEEAGLCIDDIPHILQGCVPDRYQFNPCEPMKPKHSPHAASPPLKDRIHCVAFVLHINSVNTLSDKMVAKLKKIRKDVVDCGIGYVALLTNVEEYDEVLDDSFANMTETVTSLSQVQNVQKWLNIPIANILMVSNYASERRLEPMKDILVFAALRQMLRAADDALEDLPLEDTGNLAPF.

Positions M1–D159 constitute a TLDc domain.

It belongs to the IFI44 family. As to quaternary structure, HA-28 antigen forms a complex with Kb MHC in BALB.B donor cells. Interacts with FKBP5; this interaction modulates IKBKB and IKBKE kinase activities. As to expression, expressed on cells of the hematopoietic lineage. Detected in transformed cell lines of the macrophage and B-cell lineage. Expressed in spleen and bone marrow.

It is found in the cytoplasm. Its function is as follows. Type I interferon-stimulated gene (ISG) that plays a critical role in antiviral and antibacterial activity. During bacterial infection, promotes macrophage differentiation and facilitates inflammatory cytokine secretion. Plays a role in the control of respiratory syncycial virus/RSV infection, reducing the ability of the virus to replicate. Acts as a feedback regulator of IFN responses by negatively regulating IKBKB kinase activity through interaction with FKBP5. In terms of biological role, precursor of the histocompatibility antigen HA-28 in BALB.B mice. More generally, minor histocompatibility antigens refer to immunogenic peptide which, when complexed with MHC, can generate an immune response after recognition by specific T-cells. The peptides are derived from polymorphic intracellular proteins, which are cleaved by normal pathways of antigen processing. The binding of these peptides to MHC molecules and its expression on the cell surface can stimulate T-cell responses and thereby trigger graft rejection or graft-versus-host disease (GVHD). More specifically, HA-28 minor antigen is transcribed in the BALB.B donor but not in host C57BL/6 cells. HA-28 is presented to the donor BALB.B cell surface by Kb MHC. This complex HA-28/Kb MHC elicits cytotoxic T-cell response in C57BL/6 mice immunized with BALB.B spleen cells. It induces C57BL/6 mice cells recognition and lysis by CD8 T-cell from BALB.B mice. This Mus musculus (Mouse) protein is Interferon-induced protein 44-like (Ifi44l).